The chain runs to 206 residues: Imidazoleglycerol-phosphate dehydratase (206 aa).

The interval 1–21 (MTALDSSRLLQPRTASVHRRT) is disordered.

This sequence belongs to the imidazoleglycerol-phosphate dehydratase family.

The protein resides in the cytoplasm. It catalyses the reaction D-erythro-1-(imidazol-4-yl)glycerol 3-phosphate = 3-(imidazol-4-yl)-2-oxopropyl phosphate + H2O. It functions in the pathway amino-acid biosynthesis; L-histidine biosynthesis; L-histidine from 5-phospho-alpha-D-ribose 1-diphosphate: step 6/9. The protein is Imidazoleglycerol-phosphate dehydratase of Synechococcus sp. (strain JA-2-3B'a(2-13)) (Cyanobacteria bacterium Yellowstone B-Prime).